Here is a 649-residue protein sequence, read N- to C-terminus: FAS-associated factor 1 (649 aa).

The UBA domain maps to 1–57 (MASNMDREMILADFQACTGIENIDEAITLLEQNNWDLVAAINGVIPQENGILQSDFG). Disordered regions lie at residues 56–84 (FGGETMPGPTFDPASHPAPASTPSSSAFR) and 266–290 (RRTSPVQTREQSEEQSTDVHMVSDS). Residues 68 to 82 (PASHPAPASTPSSSA) show a composition bias toward low complexity. Residue Ser-319 is modified to Phosphoserine. In terms of domain architecture, UBX spans 568-645 (NAEPVSKLRI…NLFPQETLFL (78 aa)). Position 579 is a phosphothreonine (Thr-579). Ser-581 carries the phosphoserine modification.

As to quaternary structure, interacts with CDT1 and ATPase VCP/p97. Interacts (via UBA domain) with FAS (via death domain). Interacts (via UBA domain) with NLRP12 (via DAPIN/PYRIN domain).

The protein resides in the nucleus. Functionally, ubiquitin-binding protein. Required for the progression of DNA replication forks by targeting DNA replication licensing factor CDT1 for degradation. Potentiates but cannot initiate FAS-induced apoptosis. This Mus musculus (Mouse) protein is FAS-associated factor 1 (Faf1).